A 585-amino-acid chain; its full sequence is Probable inactive serine/threonine-protein kinase slob1 (585 aa).

An FYVE-type zinc finger spans residues 21-82; the sequence is DQSSLECNDC…LCRSCNNSFE (62 aa). Zn(2+)-binding residues include Cys-27, Cys-30, Cys-43, Cys-46, Cys-51, Cys-54, Cys-74, and Cys-77. The Protein kinase domain maps to 108-478; the sequence is SKPLQDIGHT…STSLLNNSFN (371 aa). Composition is skewed to low complexity over residues 426-456 and 466-503; these read ISKLSSSSSNNNSNNNNNNNNNSNTFNNISS and LPSSTSLLNNSFNLSNNNNPSSPSTSTISPNSSLISSP. The disordered stretch occupies residues 426 to 585; the sequence is ISKLSSSSSN…SLKPSSTKKK (160 aa). Over residues 513-532 the composition is skewed to pro residues; it reads TPPPPPPPPKSAPPPPPPPS. Positions 533–542 are enriched in low complexity; that stretch reads SSKLPPSSSS. Positions 542-562 constitute a WH2 domain; that stretch reads SRNSLLESIRNADNAKKLKKT.

Belongs to the protein kinase superfamily. Ser/Thr protein kinase family.

The protein is Probable inactive serine/threonine-protein kinase slob1 (slob1) of Dictyostelium discoideum (Social amoeba).